Consider the following 294-residue polypeptide: Eukaryotic translation initiation factor 3 subunit G (294 aa).

Basic and acidic residues predominate over residues 1 to 22 (MQTFHHQDTGSEDFRQNTMDEK). 2 disordered regions span residues 1–42 (MQTF…DGTK) and 164–211 (GGMG…SDDD). A compositionally biased stretch (polar residues) spans 30–42 (STPQITQNADGTK). The span at 193–205 (GPGGPGGPGGAAG) shows a compositional bias: gly residues. An RRM domain is found at 214 to 292 (LTLRVTNLSE…LIMKVDYSKK (79 aa)).

This sequence belongs to the eIF-3 subunit G family. As to quaternary structure, component of the eukaryotic translation initiation factor 3 (eIF-3) complex.

It localises to the cytoplasm. Its function is as follows. RNA-binding component of the eukaryotic translation initiation factor 3 (eIF-3) complex, which is involved in protein synthesis of a specialized repertoire of mRNAs and, together with other initiation factors, stimulates binding of mRNA and methionyl-tRNAi to the 40S ribosome. The eIF-3 complex specifically targets and initiates translation of a subset of mRNAs involved in cell proliferation. This subunit can bind 18S rRNA. This chain is Eukaryotic translation initiation factor 3 subunit G, found in Yarrowia lipolytica (strain CLIB 122 / E 150) (Yeast).